A 445-amino-acid chain; its full sequence is D-serine transporter DsdX (445 aa).

Residues 1–4 (MHSQ) are Cytoplasmic-facing. The chain crosses the membrane as a helical span at residues 5–25 (IWVVSTLLISIVLIVLTIVKF). At 26–28 (KFH) the chain is on the periplasmic side. Residues 29-49 (PFLALLLASFFVGTMMGMGPL) form a helical membrane-spanning segment. The Cytoplasmic portion of the chain corresponds to 50-56 (DMVNAIE). A helical membrane pass occupies residues 57-77 (SGIGGTLGFLAAVIGLGTILG). Over 78–105 (KMMEVSGAAERIGLTLQRCRWLSVDVIM) the chain is Periplasmic. The chain crosses the membrane as a helical span at residues 106–126 (VLVGLICGITLFVEVGVVLLI). Over 127-139 (PLAFSIAKKTNTS) the chain is Cytoplasmic. Residues 140–160 (LLKLAIPLCTALMAVHCVVPP) traverse the membrane as a helical segment. Over 161–177 (HPAALYVANKLGADIGS) the chain is Periplasmic. The helical transmembrane segment at 178-198 (VIVYGLLVGLMASLIGGPLFL) threads the bilayer. Topologically, residues 199-223 (KFLGQRLPFKPVPTEFADLKVRDEK) are cytoplasmic. The helical transmembrane segment at 224–244 (TLPSLGATLFTILLPIALMLV) threads the bilayer. Residues 245–257 (KTIAELNMARESG) are Periplasmic-facing. The chain crosses the membrane as a helical span at residues 258-278 (LYILVEFIGNPITAMFIAVFV). The Cytoplasmic segment spans residues 279–301 (AYYVLGIRQHMSMGTMLTHTENG). Residues 302–322 (FGSIANILLIIGAGGAFNAIL) form a helical membrane-spanning segment. Residues 323–342 (KSSSLADTLAVILSNMHMHP) lie on the Periplasmic side of the membrane. 3 consecutive transmembrane segments (helical) span residues 343-363 (ILLA…ATVA), 364-384 (MMGA…ISPE), and 385-405 (IIAI…DSLF). Residues 406–424 (WLVKQYCGATLNETFKYYT) are Cytoplasmic-facing. The chain crosses the membrane as a helical span at residues 425–445 (TATFIASVVALAGTFLLSFII).

This sequence belongs to the GntP permease family.

Its subcellular location is the cell inner membrane. In terms of biological role, a D-serine-specific transporter, may function as a H(+) symporter. This chain is D-serine transporter DsdX, found in Escherichia coli (strain K12).